We begin with the raw amino-acid sequence, 344 residues long: S-adenosylmethionine:tRNA ribosyltransferase-isomerase (344 aa).

Belongs to the QueA family. Monomer.

It localises to the cytoplasm. The enzyme catalyses 7-aminomethyl-7-carbaguanosine(34) in tRNA + S-adenosyl-L-methionine = epoxyqueuosine(34) in tRNA + adenine + L-methionine + 2 H(+). The protein operates within tRNA modification; tRNA-queuosine biosynthesis. Transfers and isomerizes the ribose moiety from AdoMet to the 7-aminomethyl group of 7-deazaguanine (preQ1-tRNA) to give epoxyqueuosine (oQ-tRNA). This chain is S-adenosylmethionine:tRNA ribosyltransferase-isomerase, found in Rhizorhabdus wittichii (strain DSM 6014 / CCUG 31198 / JCM 15750 / NBRC 105917 / EY 4224 / RW1) (Sphingomonas wittichii).